Here is a 604-residue protein sequence, read N- to C-terminus: Dopamine receptor 3 (604 aa).

The Extracellular portion of the chain corresponds to 1–23; the sequence is MLTGQHHIPGIESPLMVVLWRVA. The chain crosses the membrane as a helical span at residues 24-44; that stretch reads AGVFLPLVPTMAVFGNVLVIL. At 45 to 58 the chain is on the cytoplasmic side; the sequence is SVYRERNLQTVTNM. A helical transmembrane segment spans residues 59–79; it reads LIVSLAVSDLFVAIGVMSFGV. Residues 80–96 are Extracellular-facing; it reads YYEWNGFKWGLGSFFCH. A disulfide bridge connects residues Cys95 and Cys170. The helical transmembrane segment at 97–117 threads the bilayer; that stretch reads VYQALDVACSTASILNLLAIS. The Cytoplasmic portion of the chain corresponds to 118–141; that stretch reads LDRYIAIGHPISYAQYGARGGRAM. Residues 142 to 162 form a helical membrane-spanning segment; it reads ISITIVWGVSCAVALPLLLGV. Residues 163 to 179 lie on the Extracellular side of the membrane; it reads NPMENDQCELANPWFNM. Residues 180–200 form a helical membrane-spanning segment; it reads ISSIFSFFIPCIAMIILYTII. At 201–520 the chain is on the cytoplasmic side; that stretch reads FRRLRQRERA…TKQMRREHKA (320 aa). A disordered region spans residues 399–430; sequence SIQDEKKMNSRPPENPFAHQNGTNKQRLLPNP. Residues 521–541 traverse the membrane as a helical segment; that stretch reads TVTLAVVLAVFLFCWLPFFIL. Topologically, residues 542 to 559 are extracellular; sequence HLSNSICLVIDSNSDCIG. A helical membrane pass occupies residues 560–580; the sequence is FLPLYLATWLGYLNSSLNPLI. The Cytoplasmic segment spans residues 581-604; it reads YTVFDQRFRNAFRNILSCGFFKKR.

This sequence belongs to the G-protein coupled receptor 1 family.

It is found in the cell membrane. Its function is as follows. Receptor for dopamine. The activity of this receptor is mediated by G proteins which activate adenylyl cyclase. In terms of antagonist responses, would be classed with the D2-like dopamine receptor group. Mediates the effect of dopamine on the inhibition of locomotion. Acts as an antagonist of dop-1. In Caenorhabditis briggsae, this protein is Dopamine receptor 3.